The primary structure comprises 81 residues: ATP synthase subunit c, chloroplastic (81 aa).

Transmembrane regions (helical) follow at residues 3–23 and 57–77; these read PLIS…ASIG and LAFM…LLFA.

It belongs to the ATPase C chain family. F-type ATPases have 2 components, F(1) - the catalytic core - and F(0) - the membrane proton channel. F(1) has five subunits: alpha(3), beta(3), gamma(1), delta(1), epsilon(1). F(0) has four main subunits: a(1), b(1), b'(1) and c(10-14). The alpha and beta chains form an alternating ring which encloses part of the gamma chain. F(1) is attached to F(0) by a central stalk formed by the gamma and epsilon chains, while a peripheral stalk is formed by the delta, b and b' chains.

Its subcellular location is the plastid. It localises to the chloroplast thylakoid membrane. Its function is as follows. F(1)F(0) ATP synthase produces ATP from ADP in the presence of a proton or sodium gradient. F-type ATPases consist of two structural domains, F(1) containing the extramembraneous catalytic core and F(0) containing the membrane proton channel, linked together by a central stalk and a peripheral stalk. During catalysis, ATP synthesis in the catalytic domain of F(1) is coupled via a rotary mechanism of the central stalk subunits to proton translocation. In terms of biological role, key component of the F(0) channel; it plays a direct role in translocation across the membrane. A homomeric c-ring of between 10-14 subunits forms the central stalk rotor element with the F(1) delta and epsilon subunits. The polypeptide is ATP synthase subunit c, chloroplastic (Ipomoea purpurea (Common morning glory)).